The primary structure comprises 119 residues: Large ribosomal subunit protein bL20 (119 aa).

Belongs to the bacterial ribosomal protein bL20 family.

Binds directly to 23S ribosomal RNA and is necessary for the in vitro assembly process of the 50S ribosomal subunit. It is not involved in the protein synthesizing functions of that subunit. This is Large ribosomal subunit protein bL20 from Chloroflexus aggregans (strain MD-66 / DSM 9485).